Here is a 160-residue protein sequence, read N- to C-terminus: Cytochrome b6-f complex subunit 4 (160 aa).

The next 3 membrane-spanning stretches (helical) occupy residues 36–56, 95–115, and 131–151; these read LLYI…GLAV, LLGV…PFLE, and TVFL…ALPI.

It belongs to the cytochrome b family. PetD subfamily. In terms of assembly, the 4 large subunits of the cytochrome b6-f complex are cytochrome b6, subunit IV (17 kDa polypeptide, petD), cytochrome f and the Rieske protein, while the 4 small subunits are petG, petL, petM and petN. The complex functions as a dimer.

The protein localises to the plastid. Its subcellular location is the chloroplast thylakoid membrane. Its function is as follows. Component of the cytochrome b6-f complex, which mediates electron transfer between photosystem II (PSII) and photosystem I (PSI), cyclic electron flow around PSI, and state transitions. The polypeptide is Cytochrome b6-f complex subunit 4 (Marchantia polymorpha (Common liverwort)).